We begin with the raw amino-acid sequence, 1035 residues long: Cell-division control histidine kinase PdhS (1035 aa).

The interval 1–613 (MSGSYPFIDI…HADGSEEPVD (613 aa)) is important for polar localization. The segment at 500 to 533 (QGLANTRAESETPVSETSSIEPVEPTPPVKTRSE) is disordered. The interval 614 to 1035 (AHLNAIAWRG…VFPPTRVLAD (422 aa)) is interaction with DivK. In terms of domain architecture, PAS spans 659–730 (HVEELKTILD…YLHGLSGNGV (72 aa)). The 230-residue stretch at 802 to 1031 (RISHEIRTPL…VVEIVFPPTR (230 aa)) folds into the Histidine kinase domain. The residue at position 805 (H805) is a Phosphohistidine; by autocatalysis.

As to quaternary structure, interacts with DivK.

Its subcellular location is the cytoplasm. It carries out the reaction ATP + protein L-histidine = ADP + protein N-phospho-L-histidine.. Functionally, functions as a polar differentiation marker. Essential protein that, by localizing in the old pole of dividing cells, controls cell division and maturation, probably through control of DivK phosphorylation status and cellular distribution, which in turn regulates CtrA, a transcriptional regulator of the minB operon. The asymmetrical localization of this protein is probably required for cells to enter a new division cycle. This Brucella suis biovar 1 (strain 1330) protein is Cell-division control histidine kinase PdhS (pdhS).